The chain runs to 454 residues: Putative tyrosine kinase 36 (454 aa).

ATP is bound by residues 80 to 88 (LGSGSFGKV) and Lys-98. The active-site Proton acceptor is Asp-192.

The protein belongs to the protein kinase superfamily. Tyr protein kinase family.

The catalysed reaction is L-tyrosyl-[protein] + ATP = O-phospho-L-tyrosyl-[protein] + ADP + H(+). This Alcelaphine herpesvirus 1 (strain C500) (AlHV-1) protein is Putative tyrosine kinase 36 (36).